The chain runs to 456 residues: MLNNAMSVVILAAGKGTRMYSDLPKVLHTLAGKAMVQHVIDAANELGAAHVHLVYGHGGDLLKQALKDDNLNWVLQAEQLGTGHAMQQAAPFFADDEDILMLYGDVPLISVETLQRLRDAKPQGGIGLLTVKLDDPTGYGRITRENGKVTGIVEHKDATDEQRQIQEINTGILIANGADMKRWLAKLTNNNAQGEYYITDIIALAYQEGREIVAVHPQRLSEVEGVNNRLQLSRLERVYQSEQAEKLLLAGVMLRDPARFDLRGTLTHGRDVEIDTNVIIEGNVTLGHRVKIGTGCVIKNSVIGDDCEISPYTVVEDANLAAACTIGPFARLRPGAELLEGAHVGNFVEMKKARLGKGSKAGHLTYLGDAEIGDNVNIGAGTITCNYDGANKFKTIIGDDVFVGSDTQLVAPVTVGKGATIAAGTTVTRNVGENALAISRVPQTQKEGWRRPVKKK.

The pyrophosphorylase stretch occupies residues 1–229 (MLNNAMSVVI…LSEVEGVNNR (229 aa)). UDP-N-acetyl-alpha-D-glucosamine is bound by residues 11-14 (LAAG), Lys-25, Gln-76, 81-82 (GT), 103-105 (YGD), Gly-140, Glu-154, Asn-169, and Asn-227. A Mg(2+)-binding site is contributed by Asp-105. Residue Asn-227 coordinates Mg(2+). The linker stretch occupies residues 230 to 250 (LQLSRLERVYQSEQAEKLLLA). An N-acetyltransferase region spans residues 251-456 (GVMLRDPARF…EGWRRPVKKK (206 aa)). 2 residues coordinate UDP-N-acetyl-alpha-D-glucosamine: Arg-333 and Lys-351. The Proton acceptor role is filled by His-363. Residues Tyr-366 and Asn-377 each coordinate UDP-N-acetyl-alpha-D-glucosamine. Residues Ala-380, 386–387 (NY), Ser-405, Ala-423, and Arg-440 contribute to the acetyl-CoA site.

This sequence in the N-terminal section; belongs to the N-acetylglucosamine-1-phosphate uridyltransferase family. It in the C-terminal section; belongs to the transferase hexapeptide repeat family. As to quaternary structure, homotrimer. Requires Mg(2+) as cofactor.

The protein localises to the cytoplasm. The catalysed reaction is alpha-D-glucosamine 1-phosphate + acetyl-CoA = N-acetyl-alpha-D-glucosamine 1-phosphate + CoA + H(+). It carries out the reaction N-acetyl-alpha-D-glucosamine 1-phosphate + UTP + H(+) = UDP-N-acetyl-alpha-D-glucosamine + diphosphate. Its pathway is nucleotide-sugar biosynthesis; UDP-N-acetyl-alpha-D-glucosamine biosynthesis; N-acetyl-alpha-D-glucosamine 1-phosphate from alpha-D-glucosamine 6-phosphate (route II): step 2/2. It functions in the pathway nucleotide-sugar biosynthesis; UDP-N-acetyl-alpha-D-glucosamine biosynthesis; UDP-N-acetyl-alpha-D-glucosamine from N-acetyl-alpha-D-glucosamine 1-phosphate: step 1/1. It participates in bacterial outer membrane biogenesis; LPS lipid A biosynthesis. Functionally, catalyzes the last two sequential reactions in the de novo biosynthetic pathway for UDP-N-acetylglucosamine (UDP-GlcNAc). The C-terminal domain catalyzes the transfer of acetyl group from acetyl coenzyme A to glucosamine-1-phosphate (GlcN-1-P) to produce N-acetylglucosamine-1-phosphate (GlcNAc-1-P), which is converted into UDP-GlcNAc by the transfer of uridine 5-monophosphate (from uridine 5-triphosphate), a reaction catalyzed by the N-terminal domain. The sequence is that of Bifunctional protein GlmU from Escherichia coli O139:H28 (strain E24377A / ETEC).